Reading from the N-terminus, the 162-residue chain is Phosphopantetheine adenylyltransferase (162 aa).

Position 9 (Thr9) interacts with substrate. ATP is bound by residues Thr9 to Phe10 and His17. 3 residues coordinate substrate: Lys41, Leu73, and Arg87. Residues Gly88 to Arg90, Glu98, and Phe123 to Thr129 contribute to the ATP site.

Belongs to the bacterial CoaD family. In terms of assembly, homohexamer. The cofactor is Mg(2+).

The protein resides in the cytoplasm. It carries out the reaction (R)-4'-phosphopantetheine + ATP + H(+) = 3'-dephospho-CoA + diphosphate. Its pathway is cofactor biosynthesis; coenzyme A biosynthesis; CoA from (R)-pantothenate: step 4/5. In terms of biological role, reversibly transfers an adenylyl group from ATP to 4'-phosphopantetheine, yielding dephospho-CoA (dPCoA) and pyrophosphate. In Vibrio atlanticus (strain LGP32) (Vibrio splendidus (strain Mel32)), this protein is Phosphopantetheine adenylyltransferase.